Consider the following 648-residue polypeptide: MIDIILPDGSVKQYKIGVTGQEIIQSLSISLFKKTIAVAVNNELMDLYIPIINTATVKAITIDSVQGIEILRHDTAHILAQAVKKLFPDTQVVIGPVIKDGFYYDFARDKPFTSKDLEIIEQEMQDIITKNDLIQREVWLRAKAIEFFKQQKEFYKVKLIEEIPESEEISIYRQGNFVDLCRGPHSPSTGYCAKYFKLTKVSGAYWRGNSKNESLQRIYGTAWGKKSDLDSYLHRLSEAQKRDHRKLGRELELFHFQDEAQGMPFWHSKGWTIFKIIKDYISCQIQRAGYIEVNTPMVLNQKLWEKSGHWEKFRENMFTLDTNAAEQDHNLIKDSIETKCALALKPMNCPGHIQIFNYTIKSYRDLPLRMAEFGSCHRYEPSGALYGLMRVRSFVQDDAHIFCTEDQITDETIKFCHLLKQVYQDFGFPEVKIKFSDRPEKRAGTDKIWDKAEQALIHAIQTLGEEYTINRGEGAFYGPKLEFILTDAIGREWQCGTLQVDFVLPERLNASYISSEGSKKRPVILHRAILGSFERFIGILIEHYSGKLPIWLAPIQVAVVSITDEAVNYAKQLHQELIDNNIRSTLDISNQKINYKIRNFFTAKVPLIAILGKKESESGKIAIRTLGSQEQHVISSSELIAHIRKNKK.

Residues 1–61 enclose the TGS domain; it reads MIDIILPDGS…INTATVKAIT (61 aa). A catalytic region spans residues 243-549; sequence DHRKLGRELE…LIEHYSGKLP (307 aa). The Zn(2+) site is built by cysteine 349, histidine 400, and histidine 526.

Belongs to the class-II aminoacyl-tRNA synthetase family. As to quaternary structure, homodimer. Zn(2+) is required as a cofactor.

It is found in the cytoplasm. The catalysed reaction is tRNA(Thr) + L-threonine + ATP = L-threonyl-tRNA(Thr) + AMP + diphosphate + H(+). Its function is as follows. Catalyzes the attachment of threonine to tRNA(Thr) in a two-step reaction: L-threonine is first activated by ATP to form Thr-AMP and then transferred to the acceptor end of tRNA(Thr). Also edits incorrectly charged L-seryl-tRNA(Thr). This chain is Threonine--tRNA ligase, found in Orientia tsutsugamushi (strain Ikeda) (Rickettsia tsutsugamushi).